The chain runs to 555 residues: Benzoyl-CoA-dihydrodiol lyase (555 aa).

It belongs to the benzoyl-CoA oxygenase component C family. Homodimer.

It catalyses the reaction 2,3-epoxy-2,3-dihydrobenzoyl-CoA + 2 H2O = (3Z)-6-oxohex-3-enoyl-CoA + formate + H(+). In terms of biological role, catalyzes the ring opening of 2,3-epoxy-2,3-dihydroxybenzoyl-CoA to form 3,4-didehydroadipyl-CoA semialdehyde. This Aromatoleum evansii (Azoarcus evansii) protein is Benzoyl-CoA-dihydrodiol lyase (boxC).